The primary structure comprises 167 residues: Large ribosomal subunit protein bL9 (167 aa).

Belongs to the bacterial ribosomal protein bL9 family.

In terms of biological role, binds to the 23S rRNA. This chain is Large ribosomal subunit protein bL9, found in Nitratidesulfovibrio vulgaris (strain ATCC 29579 / DSM 644 / CCUG 34227 / NCIMB 8303 / VKM B-1760 / Hildenborough) (Desulfovibrio vulgaris).